Here is a 360-residue protein sequence, read N- to C-terminus: Chorismate synthase (360 aa).

R47 serves as a coordination point for NADP(+). FMN-binding positions include 124-126 (RAS), G286, 301-305 (KPTAT), and R327.

The protein belongs to the chorismate synthase family. As to quaternary structure, homotetramer. FMNH2 serves as cofactor.

It catalyses the reaction 5-O-(1-carboxyvinyl)-3-phosphoshikimate = chorismate + phosphate. It participates in metabolic intermediate biosynthesis; chorismate biosynthesis; chorismate from D-erythrose 4-phosphate and phosphoenolpyruvate: step 7/7. Its function is as follows. Catalyzes the anti-1,4-elimination of the C-3 phosphate and the C-6 proR hydrogen from 5-enolpyruvylshikimate-3-phosphate (EPSP) to yield chorismate, which is the branch point compound that serves as the starting substrate for the three terminal pathways of aromatic amino acid biosynthesis. This reaction introduces a second double bond into the aromatic ring system. The sequence is that of Chorismate synthase from Synechococcus sp. (strain RCC307).